Reading from the N-terminus, the 102-residue chain is Small ribosomal subunit protein uS10 (102 aa).

This sequence belongs to the universal ribosomal protein uS10 family. Part of the 30S ribosomal subunit.

In terms of biological role, involved in the binding of tRNA to the ribosomes. The protein is Small ribosomal subunit protein uS10 of Gluconobacter oxydans (strain 621H) (Gluconobacter suboxydans).